We begin with the raw amino-acid sequence, 316 residues long: Pantothenate kinase (316 aa).

ATP is bound at residue 95–102 (GSVAVGKS).

The protein belongs to the prokaryotic pantothenate kinase family.

Its subcellular location is the cytoplasm. It catalyses the reaction (R)-pantothenate + ATP = (R)-4'-phosphopantothenate + ADP + H(+). It functions in the pathway cofactor biosynthesis; coenzyme A biosynthesis; CoA from (R)-pantothenate: step 1/5. The chain is Pantothenate kinase from Salmonella gallinarum (strain 287/91 / NCTC 13346).